The primary structure comprises 141 residues: Hemoglobin subunit alpha-D (141 aa).

A Globin domain is found at 1 to 141 (MLSADEKQLI…VSDVLAEKYR (141 aa)). Residues His58 and His87 each coordinate heme b.

This sequence belongs to the globin family. Heterotetramer of two alpha-D chains and two beta chains. As to expression, red blood cells.

Its function is as follows. Involved in oxygen transport from the lung to the various peripheral tissues. The protein is Hemoglobin subunit alpha-D (HBAD) of Phrynops hilarii (Snake-necked turtle).